A 326-amino-acid chain; its full sequence is MDYTHQPALIPCGQDKYMPKSELLLHLKTYNLYYEGQNLQLRHREEEDEFIVEGLLNISWGLRRPIRLQMQDDHERIRPPPSSSSWHSGCNLGAQGTTLKPLTMPTVQISEVDMPVEGLETHSPTDSRGLKPVQEDTPQLMRTRSDVGVRRRGNVRTSSDQRRIRRHRFSINGHFYNHKTSVFTPAYGSVTNVRINSTMTTPQVLKLLLNKFKIENSAEEFALYVVHTSGEKQRLKSSDYPLIARILQGPCEQISKVFLMEKDQVEEVTYDVAQYIKFEMPVLKSFIQKLQEEEDREVEKLMRKYTVLRLMIRQRLEEIAETPETI.

Residues 176–264 form the Ras-associating domain; the sequence is YNHKTSVFTP…SKVFLMEKDQ (89 aa). An SARAH domain is found at 272 to 319; it reads VAQYIKFEMPVLKSFIQKLQEEEDREVEKLMRKYTVLRLMIRQRLEEI.

In terms of assembly, interacts directly with activated KRAS in a GTP-dependent manner. Interacts (via SARAH domain) with STK3/MST2 and STK4/MST1. Phosphorylated by STK3/MST2 and STK4/MST1.

Its subcellular location is the nucleus. It is found in the cytoplasm. The protein localises to the chromosome. It localises to the centromere. The protein resides in the kinetochore. In terms of biological role, potential tumor suppressor. Acts as a KRAS-specific effector protein. May promote apoptosis and cell cycle arrest. Stabilizes STK3/MST2 by protecting it from proteasomal degradation. This is Ras association domain-containing protein 2 (Rassf2) from Mus musculus (Mouse).